Consider the following 252-residue polypeptide: Imidazole glycerol phosphate synthase subunit HisF (252 aa).

Catalysis depends on residues aspartate 11 and aspartate 130.

It belongs to the HisA/HisF family. Heterodimer of HisH and HisF.

The protein localises to the cytoplasm. The enzyme catalyses 5-[(5-phospho-1-deoxy-D-ribulos-1-ylimino)methylamino]-1-(5-phospho-beta-D-ribosyl)imidazole-4-carboxamide + L-glutamine = D-erythro-1-(imidazol-4-yl)glycerol 3-phosphate + 5-amino-1-(5-phospho-beta-D-ribosyl)imidazole-4-carboxamide + L-glutamate + H(+). It participates in amino-acid biosynthesis; L-histidine biosynthesis; L-histidine from 5-phospho-alpha-D-ribose 1-diphosphate: step 5/9. IGPS catalyzes the conversion of PRFAR and glutamine to IGP, AICAR and glutamate. The HisF subunit catalyzes the cyclization activity that produces IGP and AICAR from PRFAR using the ammonia provided by the HisH subunit. This is Imidazole glycerol phosphate synthase subunit HisF from Bacillus cytotoxicus (strain DSM 22905 / CIP 110041 / 391-98 / NVH 391-98).